We begin with the raw amino-acid sequence, 305 residues long: Serine/threonine-protein phosphatase ppe1 (305 aa).

Mn(2+) is bound by residues Asp-51, His-53, Asp-79, and Asn-111. Catalysis depends on His-112, which acts as the Proton donor. Mn(2+)-binding residues include His-161 and His-235.

This sequence belongs to the PPP phosphatase family. PP-6 (PP-V) subfamily. In terms of assembly, interacts with sts5, ekc1 and mis12. It depends on Mn(2+) as a cofactor.

The protein resides in the nucleus. The catalysed reaction is O-phospho-L-seryl-[protein] + H2O = L-seryl-[protein] + phosphate. The enzyme catalyses O-phospho-L-threonyl-[protein] + H2O = L-threonyl-[protein] + phosphate. In terms of biological role, has a role in chromosome segregation. May provide a dynamic connection between kinetochore microtubules and kinetochore chromatin. Negatively regulates mis12. This chain is Serine/threonine-protein phosphatase ppe1 (ppe1), found in Schizosaccharomyces pombe (strain 972 / ATCC 24843) (Fission yeast).